Consider the following 156-residue polypeptide: Nucleoredoxin-like protein 2 (156 aa).

The Thioredoxin domain occupies 9–147 (RLVTREGTVV…LACFQNWVEA (139 aa)).

Belongs to the nucleoredoxin family. As to expression, both isoforms are expressed in retina, in the photoreceptor layer, and throughout the olfactory sensory neuron layer of the nasal epithelium, in neurons. Also expressed at low levels in brain and testis.

In terms of biological role, may be involved in the maintenance of both the function and the viability of sensory neurons, including photoreceptors and olfactory neurons. In the retina, isoform 1 may be required for rod function and isoform 2 for cone viability and function. The protein is Nucleoredoxin-like protein 2 (Nxnl2) of Mus musculus (Mouse).